A 440-amino-acid chain; its full sequence is Thymidine phosphorylase (440 aa).

Belongs to the thymidine/pyrimidine-nucleoside phosphorylase family. In terms of assembly, homodimer.

It catalyses the reaction thymidine + phosphate = 2-deoxy-alpha-D-ribose 1-phosphate + thymine. It functions in the pathway pyrimidine metabolism; dTMP biosynthesis via salvage pathway; dTMP from thymine: step 1/2. The enzymes which catalyze the reversible phosphorolysis of pyrimidine nucleosides are involved in the degradation of these compounds and in their utilization as carbon and energy sources, or in the rescue of pyrimidine bases for nucleotide synthesis. This chain is Thymidine phosphorylase, found in Escherichia coli (strain 55989 / EAEC).